The following is a 525-amino-acid chain: D-aminopeptidase (525 aa).

The Nucleophile role is filled by Ser62. Residue Lys65 is the Proton donor/acceptor of the active site. Positions 485-495 (PRALDHTAPGD) are important for specificity. Asp489 provides a ligand contact to substrate.

It belongs to the peptidase S12 family. As to quaternary structure, homodimer.

The catalysed reaction is Release of an N-terminal D-amino acid from a peptide, Xaa-|-Yaa-, in which Xaa is preferably D-Ala, D-Ser or D-Thr. D-amino acid amides and methyl esters also are hydrolyzed, as is glycine amide.. With respect to regulation, inhibited by beta-lactam compounds such as 6-aminopenicillic acid, 7-aminocephalosporanic acid, benzylpenicillin and ampicillin. Inhibited by p-chloromercuribenzoate. Its function is as follows. Hydrolyzes N-terminal residues in D-amino acid-containing peptides. The chain is D-aminopeptidase from Gluconobacter oxydans (strain 621H) (Gluconobacter suboxydans).